Here is a 158-residue protein sequence, read N- to C-terminus: 6,7-dimethyl-8-ribityllumazine synthase (158 aa).

5-amino-6-(D-ribitylamino)uracil is bound by residues phenylalanine 18, 50–52, and 74–76; these read SYD and AVI. A (2S)-2-hydroxy-3-oxobutyl phosphate-binding site is contributed by 79-80; sequence ET. The active-site Proton donor is the histidine 82. Leucine 107 is a binding site for 5-amino-6-(D-ribitylamino)uracil. Position 122 (arginine 122) interacts with (2S)-2-hydroxy-3-oxobutyl phosphate.

The protein belongs to the DMRL synthase family.

It carries out the reaction (2S)-2-hydroxy-3-oxobutyl phosphate + 5-amino-6-(D-ribitylamino)uracil = 6,7-dimethyl-8-(1-D-ribityl)lumazine + phosphate + 2 H2O + H(+). It functions in the pathway cofactor biosynthesis; riboflavin biosynthesis; riboflavin from 2-hydroxy-3-oxobutyl phosphate and 5-amino-6-(D-ribitylamino)uracil: step 1/2. Its function is as follows. Catalyzes the formation of 6,7-dimethyl-8-ribityllumazine by condensation of 5-amino-6-(D-ribitylamino)uracil with 3,4-dihydroxy-2-butanone 4-phosphate. This is the penultimate step in the biosynthesis of riboflavin. The chain is 6,7-dimethyl-8-ribityllumazine synthase from Sulfolobus acidocaldarius (strain ATCC 33909 / DSM 639 / JCM 8929 / NBRC 15157 / NCIMB 11770).